A 104-amino-acid polypeptide reads, in one-letter code: Large ribosomal subunit protein bL21 (104 aa).

Belongs to the bacterial ribosomal protein bL21 family. As to quaternary structure, part of the 50S ribosomal subunit. Contacts protein L20.

Functionally, this protein binds to 23S rRNA in the presence of protein L20. The sequence is that of Large ribosomal subunit protein bL21 from Helicobacter pylori (strain G27).